Here is a 183-residue protein sequence, read N- to C-terminus: UPF0398 protein PEPE_0933 (183 aa).

Belongs to the UPF0398 family.

This Pediococcus pentosaceus (strain ATCC 25745 / CCUG 21536 / LMG 10740 / 183-1w) protein is UPF0398 protein PEPE_0933.